The primary structure comprises 97 residues: Mapk-regulated corepressor-interacting protein 1 (97 aa).

Positions 1-29 are disordered; the sequence is MTSSPVSRVVYNGKRNSSPRSPTNSSEIF. Over residues 15 to 26 the composition is skewed to low complexity; that stretch reads RNSSPRSPTNSS. Position 21 is a phosphoserine (S21). Phosphothreonine is present on T30. A Phosphotyrosine modification is found at Y41. K79 is modified (N6-acetyllysine). A PXDLS motif motif is present at residues 80 to 84; it reads PIDLS.

It belongs to the MCRIP family. Interacts (unphosphorylated form, via the PXDLS motif) with CTBP1, competitively inhibiting CTBP-ZEB1 interaction. Interacts with CTBP2. Interacts with MCRIP2. Interacts with DDX6. In terms of processing, phosphorylation by MAPK3/1 (ERK1/2) regulates MCRIP1 binding to CTBP(s). Widely expressed (at protein level).

It is found in the nucleus. Its subcellular location is the cytoplasm. It localises to the stress granule. Functionally, the phosphorylation status of MCRIP1 functions as a molecular switch to regulate epithelial-mesenchymal transition. Unphosphorylated MCRIP1 binds to and inhibits the transcriptional corepressor CTBP(s). When phosphorylated by MAPK/ERK, MCRIP1 releases CTBP(s) resulting in transcriptional silencing of the E-cadherin gene and induction of epithelial-mesenchymal transition. In Mus musculus (Mouse), this protein is Mapk-regulated corepressor-interacting protein 1 (Mcrip1).